Here is a 323-residue protein sequence, read N- to C-terminus: Beta-ketoacyl-[acyl-carrier-protein] synthase III (323 aa).

Residues Cys112 and His250 contribute to the active site. The tract at residues 251–255 is ACP-binding; it reads QANQR. Asn280 is a catalytic residue.

The protein belongs to the thiolase-like superfamily. FabH family. Homodimer.

It localises to the cytoplasm. It carries out the reaction malonyl-[ACP] + acetyl-CoA + H(+) = 3-oxobutanoyl-[ACP] + CO2 + CoA. It functions in the pathway lipid metabolism; fatty acid biosynthesis. Its function is as follows. Catalyzes the condensation reaction of fatty acid synthesis by the addition to an acyl acceptor of two carbons from malonyl-ACP. Catalyzes the first condensation reaction which initiates fatty acid synthesis and may therefore play a role in governing the total rate of fatty acid production. Possesses both acetoacetyl-ACP synthase and acetyl transacylase activities. Its substrate specificity determines the biosynthesis of branched-chain and/or straight-chain of fatty acids. The chain is Beta-ketoacyl-[acyl-carrier-protein] synthase III from Oenococcus oeni (strain ATCC BAA-331 / PSU-1).